The chain runs to 236 residues: Pyridoxine 5'-phosphate synthase (236 aa).

N6 lines the 3-amino-2-oxopropyl phosphate pocket. 8–9 serves as a coordination point for 1-deoxy-D-xylulose 5-phosphate; that stretch reads DH. R17 serves as a coordination point for 3-amino-2-oxopropyl phosphate. Catalysis depends on H42, which acts as the Proton acceptor. 1-deoxy-D-xylulose 5-phosphate contacts are provided by R44 and H49. The active-site Proton acceptor is E69. Residue T99 participates in 1-deoxy-D-xylulose 5-phosphate binding. The Proton donor role is filled by H190. Residues G191 and 212 to 213 contribute to the 3-amino-2-oxopropyl phosphate site; that span reads GH.

It belongs to the PNP synthase family. As to quaternary structure, homooctamer; tetramer of dimers.

It localises to the cytoplasm. The catalysed reaction is 3-amino-2-oxopropyl phosphate + 1-deoxy-D-xylulose 5-phosphate = pyridoxine 5'-phosphate + phosphate + 2 H2O + H(+). It functions in the pathway cofactor biosynthesis; pyridoxine 5'-phosphate biosynthesis; pyridoxine 5'-phosphate from D-erythrose 4-phosphate: step 5/5. Functionally, catalyzes the complicated ring closure reaction between the two acyclic compounds 1-deoxy-D-xylulose-5-phosphate (DXP) and 3-amino-2-oxopropyl phosphate (1-amino-acetone-3-phosphate or AAP) to form pyridoxine 5'-phosphate (PNP) and inorganic phosphate. This chain is Pyridoxine 5'-phosphate synthase, found in Prosthecochloris aestuarii (strain DSM 271 / SK 413).